We begin with the raw amino-acid sequence, 30 residues long: Cycloviolacin-O9 (30 aa).

A cross-link (cyclopeptide (Gly-Asn)) is located at residues 1-30 (GIPCGESCVWIPCLTSAVGCSCKSKVCYRN). 3 cysteine pairs are disulfide-bonded: Cys4–Cys20, Cys8–Cys22, and Cys13–Cys27.

In terms of processing, this is a cyclic peptide.

In terms of biological role, probably participates in a plant defense mechanism. In Viola odorata (Sweet violet), this protein is Cycloviolacin-O9.